An 824-amino-acid chain; its full sequence is Probable receptor-like protein kinase At5g24010 (824 aa).

The first 24 residues, 1–24 (MAFPINLTQTLLFFFCPLLHLSFA), serve as a signal peptide directing secretion. N-linked (GlcNAc...) asparagine glycosylation is found at asparagine 6, asparagine 41, asparagine 204, asparagine 227, and asparagine 291. Residues 25 to 406 (AFTPTDNYLI…SSEVVSGKRN (382 aa)) lie on the Extracellular side of the membrane. Residues 407–427 (VVWIVVGSVLGGFVFLSLFFL) form a helical membrane-spanning segment. Over 428-824 (SVLCLCRRKN…FSQLMTNAGR (397 aa)) the chain is Cytoplasmic. Residues 440-467 (TRSSESTGWTPLRRFRGSSNSRTTERTV) form a disordered region. The segment covering 456–467 (GSSNSRTTERTV) has biased composition (polar residues). The Protein kinase domain occupies 489 to 764 (FDRSLVIGVG…VLWNLEHVLQ (276 aa)). ATP is bound by residues 495-503 (IGVGGFGMV) and lysine 517. Residue aspartate 613 is the Proton acceptor of the active site. The segment at 777-803 (DYGDVTDPRTARQGLSNGSNIERDYGD) is disordered.

This sequence belongs to the protein kinase superfamily. Ser/Thr protein kinase family.

The protein localises to the membrane. The protein is Probable receptor-like protein kinase At5g24010 of Arabidopsis thaliana (Mouse-ear cress).